A 240-amino-acid polypeptide reads, in one-letter code: uncharacterized protein (240 aa).

The protein resides in the mitochondrion. This is an uncharacterized protein from Arabidopsis thaliana (Mouse-ear cress).